The following is an 83-amino-acid chain: Mu-theraphotoxin-Hhn2o (83 aa).

A signal peptide spans 1 to 21 (MKASMFLALAGLVLLFVVGYA). Positions 22–48 (SESEEKEFPIELLSKIFAVDVFKGEER) are excised as a propeptide. 3 disulfide bridges follow: Cys-50-Cys-65, Cys-57-Cys-70, and Cys-64-Cys-77. Leu-81 carries the post-translational modification Leucine amide.

It belongs to the neurotoxin 10 (Hwtx-1) family. 15 (Hntx-3) subfamily. In terms of assembly, monomer. In terms of tissue distribution, expressed by the venom gland.

The protein resides in the secreted. Lethal neurotoxin. Selectively blocks tetrodotoxin-sensitive voltage-gated sodium channels (Nav). Does not affect tetrodotoxin-resistant voltage-gated sodium channels or calcium channels. The chain is Mu-theraphotoxin-Hhn2o from Cyriopagopus hainanus (Chinese bird spider).